The following is a 615-amino-acid chain: Prickle planar cell polarity protein 3 (615 aa).

A compositionally biased stretch (basic residues) spans 1–12 (MFARGSRRRRSG). A disordered region spans residues 1 to 26 (MFARGSRRRRSGRAPPEAEDPDRGQP). The region spanning 74 to 182 (SDFQRHSISD…IVRIFPVTIT (109 aa)) is the PET domain. LIM zinc-binding domains follow at residues 184 to 249 (AICE…CLRP), 250 to 309 (RCQA…RHAE), and 310 to 373 (YCDG…SEPT). Disordered regions lie at residues 396–567 (ASFS…LGER) and 587–615 (TFNS…CIVA). The segment covering 405–415 (SETTTKGTSTE) has biased composition (polar residues). Phosphoserine occurs at positions 475 and 491. A compositionally biased stretch (basic residues) spans 508–531 (PSRRRHHHHNHHHHHNRHPSRRRH). Low complexity predominate over residues 537–555 (GSGSDSESCSSSPSSSSSE). Over residues 606 to 615 (QARDKNCIVA) the composition is skewed to basic and acidic residues.

This sequence belongs to the prickle / espinas / testin family. Interacts with VANGL2 via its C-terminus. The VANGL2-dependent membrane recruitment of PRICKLE3 is a prerequisite for its polarization. Interacts with WTIP. WTIP is involved in the recruitment of PRICKLE3 to the basal body. Interacts with MT-ATP8, a component of the mitochondrial complex V. Widely expressed.

The protein localises to the cytoplasm. Its subcellular location is the cell membrane. It is found in the mitochondrion. Involved in the planar cell polarity (PCP) pathway that is essential for the polarization of epithelial cells during morphogenetic processes, including gastrulation and neurulation. PCP is maintained by two molecular modules, the global and the core modules, PRICKLE3 being part of the core module. Distinct complexes of the core module segregate to opposite sides of the cell, where they interact with the opposite complex in the neighboring cell at or near the adherents junctions. Involved in the organization of the basal body. Involved in cilia growth and positioning. Required for proper assembly, stability, and function of mitochondrial membrane ATP synthase (mitochondrial complex V). The polypeptide is Prickle planar cell polarity protein 3 (Homo sapiens (Human)).